Here is a 548-residue protein sequence, read N- to C-terminus: ETS domain-containing transcription factor ERF (548 aa).

Residues Thr3 and Thr7 each carry the phosphothreonine modification. 2 positions are modified to phosphoserine: Ser20 and Ser24. A DNA-binding region (ETS) is located at residues 27–107 (IQLWHFILEL…KGKRFTYKFN (81 aa)). 3 disordered regions span residues 130 to 169 (QSAP…SSSS), 184 to 225 (GSVS…LARL), and 280 to 304 (SPTL…SHFS). A phosphoserine mark is found at Ser185 and Ser190. Over residues 289–301 (SGGGGPSGSGGGS) the composition is skewed to gly residues. A Phosphoserine modification is found at Ser327. The segment at 342–478 (PQRPDKCPLP…GEAPGASQCM (137 aa)) is disordered. Positions 348 to 361 (CPLPPMAPETPPVP) are enriched in pro residues. Low complexity-rich tracts occupy residues 362 to 373 (SSASSSSSSSSS) and 394 to 403 (KAVAGADKSG). Residues Ser431 and Ser435 each carry the phosphoserine modification. Residues 431–451 (SEGESEEVEVTDISDEDEEDG) show a composition bias toward acidic residues. Position 441 is a phosphothreonine (Thr441). Ser444 carries the phosphoserine modification. Glycyl lysine isopeptide (Lys-Gly) (interchain with G-Cter in SUMO2) cross-links involve residues Lys465, Lys481, and Lys512. Positions 492–548 (CRLEGGGGPAGGFEDEGEDKKVRGEGPGEAGGPLTPRRVSSDLQHATAQLSLEHRDS) are disordered. Thr526 is subject to Phosphothreonine; by MAPK1. Ser531, Ser532, and Ser548 each carry phosphoserine. Residues 532–541 (SDLQHATAQL) show a composition bias toward polar residues.

This sequence belongs to the ETS family. Phosphorylated by multiple kinases including MAPK1/ERK2 at THR-526. Phosphorylation regulates the activity of ERF. In terms of tissue distribution, highest levels in testis, ovary, pancreas, and heart.

The protein resides in the nucleus. Potent transcriptional repressor that binds to the H1 element of the Ets2 promoter. May regulate other genes involved in cellular proliferation. Required for extraembryonic ectoderm differentiation, ectoplacental cone cavity closure, and chorioallantoic attachment. May be important for regulating trophoblast stem cell differentiation. In Homo sapiens (Human), this protein is ETS domain-containing transcription factor ERF (ERF).